We begin with the raw amino-acid sequence, 357 residues long: Vomeronasal type-1 receptor 5 (357 aa).

The Extracellular segment spans residues 1–3; sequence MLK. The helical transmembrane segment at 4–24 threads the bilayer; sequence LVIIENMAEIMLFSLDLLLFS. Residues 25-52 lie on the Cytoplasmic side of the membrane; the sequence is TDILCFNFPSKMIKLPGFITIQIFFYPQ. Residues 53-73 traverse the membrane as a helical segment; the sequence is ASFGISANTILFLFHIFTFVF. Residues 74–81 are Extracellular-facing; it reads SHRSKSID. The chain crosses the membrane as a helical span at residues 82-102; the sequence is MIISHLSLIHILLLFTQAILV. The Cytoplasmic segment spans residues 103–130; that stretch reads SLDFFGSQNTQDDLRCKVIVFLNKVMRG. Residues 131–151 form a helical membrane-spanning segment; it reads LSICTPCLLNVLQAIISPSIF. Residues 152 to 163 are Extracellular-facing; the sequence is SLAKLKHPSASH. Residues 164-184 form a helical membrane-spanning segment; that stretch reads ILGFFLFSWVLNMFIGVIFCC. At 185 to 269 the chain is on the cytoplasmic side; that stretch reads TLWLPPVKWG…PVSPVKRASQ (85 aa). The helical transmembrane segment at 270–290 threads the bilayer; sequence TILLLVSFVFIYWVDFMFSFS. Over 291 to 300 the chain is Extracellular; the sequence is RGVTWINDSL. Asparagine 297 carries an N-linked (GlcNAc...) asparagine glycan. Residues 301–321 traverse the membrane as a helical segment; it reads LVWFQVIVANSYATISPLMLI. Over 322–357 the chain is Cytoplasmic; sequence YADNQIFKTLQMLWFKYLSPPKLMLKFNRQCGSTKK.

The protein belongs to the G-protein coupled receptor 1 family.

The protein resides in the cell membrane. Putative pheromone receptor. This Gorilla gorilla gorilla (Western lowland gorilla) protein is Vomeronasal type-1 receptor 5 (VN1R5).